A 311-amino-acid polypeptide reads, in one-letter code: L-lactate dehydrogenase (311 aa).

NAD(+) contacts are provided by residues V12, D33, K38, Y63, and 77 to 78 (GA). Substrate is bound by residues Q80, R86, and 118-121 (NPVD). NAD(+) contacts are provided by residues 116–118 (VTN) and S141. Residue 146 to 149 (DSAR) coordinates substrate. Beta-D-fructose 1,6-bisphosphate contacts are provided by R151 and H166. H173 functions as the Proton acceptor in the catalytic mechanism. At Y219 the chain carries Phosphotyrosine. T228 is a substrate binding site.

The protein belongs to the LDH/MDH superfamily. LDH family. Homotetramer.

The protein resides in the cytoplasm. The enzyme catalyses (S)-lactate + NAD(+) = pyruvate + NADH + H(+). Its pathway is fermentation; pyruvate fermentation to lactate; (S)-lactate from pyruvate: step 1/1. Allosterically activated by fructose 1,6-bisphosphate (FBP). Catalyzes the conversion of lactate to pyruvate. This Thermoanaerobacter pseudethanolicus (strain ATCC 33223 / 39E) (Clostridium thermohydrosulfuricum) protein is L-lactate dehydrogenase.